Here is a 358-residue protein sequence, read N- to C-terminus: NAC domain-containing protein 12 (358 aa).

One can recognise an NAC domain in the interval 16–177 (VPPGFRFHPT…GWVVCRVFRK (162 aa)). Residues 116-183 (IGLRKTLVFY…VFRKKNYQKI (68 aa)) mediate DNA binding.

In terms of tissue distribution, stems and roots, specifically in interfascicular fibers (sclerenchyma), cells differentiating into vascular vessels (cambium), and xylem.

It localises to the nucleus. In terms of biological role, transcriptional activator of genes involved in biosynthesis of secondary walls. Together with NST1, required for the secondary cell wall thickening and lignification of sclerenchymatous fibers and secondary xylem vessels (tracheary elements). Seems to repress the secondary cell wall thickening of xylary fibers. May also regulate the secondary cell wall lignification of other tissues. Binds to and activates the promoter of MYB46. This Arabidopsis thaliana (Mouse-ear cress) protein is NAC domain-containing protein 12.